Reading from the N-terminus, the 227-residue chain is DnaJ homolog subfamily B member 8 (227 aa).

Residues 3–69 (NYYEVLGVQS…KKRSVYDRAG (67 aa)) form the J domain.

As to quaternary structure, interacts with histone deacetylases HDAC4, HDAC6, and SIRT2, HDAC activity is required for antiaggregation.

Functionally, efficient suppressor of aggregation and toxicity of disease-associated polyglutamine proteins. This chain is DnaJ homolog subfamily B member 8 (Dnajb8), found in Mus musculus (Mouse).